A 152-amino-acid chain; its full sequence is Superoxide dismutase [Cu-Zn] (152 aa).

3 residues coordinate Cu cation: His-45, His-47, and His-62. Cys-56 and Cys-145 are joined by a disulfide. Positions 62, 70, 79, and 82 each coordinate Zn(2+). Residue His-119 participates in Cu cation binding.

This sequence belongs to the Cu-Zn superoxide dismutase family. As to quaternary structure, homodimer. The cofactor is Cu cation. Zn(2+) serves as cofactor.

The protein resides in the cytoplasm. It carries out the reaction 2 superoxide + 2 H(+) = H2O2 + O2. Functionally, destroys radicals which are normally produced within the cells and which are toxic to biological systems. This is Superoxide dismutase [Cu-Zn] (SODCC) from Panax ginseng (Korean ginseng).